The primary structure comprises 383 residues: Teichoic acid glycerol-phosphate primase (383 aa).

This sequence belongs to the CDP-glycerol glycerophosphotransferase family.

It is found in the cell membrane. The enzyme catalyses N-acetyl-beta-D-mannosaminyl-(1-&gt;4)-N-acetyl-alpha-D-glucosaminyl di-trans,octa-cis-undecaprenyl diphosphate + CDP-glycerol = 4-O-[(2R)-glycerylphospho]-N-acetyl-beta-D-mannosaminyl-(1-&gt;4)-N-acetyl-alpha-D-glucosaminyl di-trans,octa-cis-undecaprenyl diphosphate + CMP + H(+). It participates in cell wall biogenesis; poly(ribitol phosphate) teichoic acid biosynthesis. Catalyzes the addition of a single glycerol phosphate residue to the prenoldiphosphate-linked disaccharide. The protein is Teichoic acid glycerol-phosphate primase (tarB) of Bacillus spizizenii (strain ATCC 23059 / NRRL B-14472 / W23) (Bacillus subtilis subsp. spizizenii).